A 125-amino-acid polypeptide reads, in one-letter code: Homeobox protein HD-8 (125 aa).

Residues 30-89 constitute a DNA-binding region (homeobox); that stretch reads EPDTRTRKTTFQMMVLKEVFKIAPHPSTLTKADLALMIKLPLKAVQIWFQNERSRKERGG.

It is found in the nucleus. The polypeptide is Homeobox protein HD-8 (HD-8) (Encephalitozoon cuniculi (strain GB-M1) (Microsporidian parasite)).